The following is a 277-amino-acid chain: Bis(5'-nucleosyl)-tetraphosphatase, symmetrical (277 aa).

The protein belongs to the Ap4A hydrolase family.

The catalysed reaction is P(1),P(4)-bis(5'-adenosyl) tetraphosphate + H2O = 2 ADP + 2 H(+). Its function is as follows. Hydrolyzes diadenosine 5',5'''-P1,P4-tetraphosphate to yield ADP. In Chromobacterium violaceum (strain ATCC 12472 / DSM 30191 / JCM 1249 / CCUG 213 / NBRC 12614 / NCIMB 9131 / NCTC 9757 / MK), this protein is Bis(5'-nucleosyl)-tetraphosphatase, symmetrical.